The sequence spans 145 residues: Large ribosomal subunit protein uL14m (145 aa).

The transit peptide at 1–30 (MAFFTGLWGPFTCVSRVLSHHCFSTTGSLS) directs the protein to the mitochondrion.

It belongs to the universal ribosomal protein uL14 family. As to quaternary structure, component of the mitochondrial large ribosomal subunit (mt-LSU). Mature mammalian 55S mitochondrial ribosomes consist of a small (28S) and a large (39S) subunit. The 28S small subunit contains a 12S ribosomal RNA (12S mt-rRNA) and 30 different proteins. The 39S large subunit contains a 16S rRNA (16S mt-rRNA), a copy of mitochondrial valine transfer RNA (mt-tRNA(Val)), which plays an integral structural role, and 52 different proteins. Interacts with MALSU1.

It is found in the mitochondrion. Functionally, forms part of 2 intersubunit bridges in the assembled ribosome. Upon binding to MALSU1 intersubunit bridge formation is blocked, preventing ribosome formation and repressing translation. This chain is Large ribosomal subunit protein uL14m (MRPL14), found in Homo sapiens (Human).